We begin with the raw amino-acid sequence, 41 residues long: Large ribosomal subunit protein bL36 (41 aa).

The protein belongs to the bacterial ribosomal protein bL36 family.

This chain is Large ribosomal subunit protein bL36, found in Sphingopyxis alaskensis (strain DSM 13593 / LMG 18877 / RB2256) (Sphingomonas alaskensis).